An 890-amino-acid chain; its full sequence is tRNase Z TRZ3, mitochondrial (890 aa).

Residues 1–44 (MINSMPYLHKNLRLLRLLSSKSSPFPLSLRPFSPRSFSLSTLFS) constitute a mitochondrion transit peptide. Residues 46-67 (SSSSSSMENNEATNGSKSSSNS) form a disordered region.

It belongs to the RNase Z family. Homodimer. It depends on Zn(2+) as a cofactor. Ca(2+) is required as a cofactor. Mn(2+) serves as cofactor. The cofactor is Mg(2+).

It localises to the mitochondrion. The protein localises to the nucleus. It carries out the reaction Endonucleolytic cleavage of RNA, removing extra 3' nucleotides from tRNA precursor, generating 3' termini of tRNAs. A 3'-hydroxy group is left at the tRNA terminus and a 5'-phosphoryl group is left at the trailer molecule.. Its function is as follows. Zinc phosphodiesterase, which displays tRNA 3'-processing endonuclease activity. Involved in tRNA maturation, by removing a 3'-trailer from precursor tRNA. Can process the mitochondrial tRNA-like structures (t-elements). Involved in the processing of small nucleolar RNAs (snoRNAs). In Arabidopsis thaliana (Mouse-ear cress), this protein is tRNase Z TRZ3, mitochondrial.